The primary structure comprises 209 residues: uncharacterized protein (209 aa).

4Fe-4S ferredoxin-type domains are found at residues 38–67 (KTKP…IFSF), 63–92 (KIFS…KDRF), 90–119 (DRFT…KEIP), 122–151 (KTPV…EINP), 145–174 (INKE…TPDE), and 179–209 (LIVK…HRES). Residues Cys-47, Cys-50, Cys-53, Cys-57, Cys-72, Cys-75, Cys-78, Cys-82, Cys-99, Cys-102, Cys-105, and Cys-109 each contribute to the [4Fe-4S] cluster site. Residues Cys-154, Cys-157, Cys-160, Cys-164, Cys-188, Cys-191, Cys-194, and Cys-198 each coordinate [4Fe-4S] cluster.

This is an uncharacterized protein from Methanocaldococcus jannaschii (strain ATCC 43067 / DSM 2661 / JAL-1 / JCM 10045 / NBRC 100440) (Methanococcus jannaschii).